Consider the following 199-residue polypeptide: Recombination protein RecR (199 aa).

The segment at 58–73 adopts a C4-type zinc-finger fold; the sequence is CKKCFNFTSEDECEIC. The 95-residue stretch at 81-175 folds into the Toprim domain; the sequence is KLICVVAETK…KVTRIAYGLP (95 aa).

The protein belongs to the RecR family.

Functionally, may play a role in DNA repair. It seems to be involved in an RecBC-independent recombinational process of DNA repair. It may act with RecF and RecO. This Prochlorococcus marinus (strain MIT 9312) protein is Recombination protein RecR.